A 749-amino-acid polypeptide reads, in one-letter code: Disintegrin and metalloproteinase domain-containing protein 10 (749 aa).

Positions 1–19 (MVLPTVLILLLSWAAGLGG) are cleaved as a signal peptide. The propeptide occupies 20–214 (QYGNPLNKYI…SGPELLRKKR (195 aa)). Topologically, residues 20-673 (QYGNPLNKYI…SPQLYENIAE (654 aa)) are extracellular. The short motif at 171-178 (GGCADHSV) is the Cysteine switch element. Cys173 contributes to the Zn(2+) binding site. Positions 221 to 457 (NTCQLYIQTD…KRNNCFVESG (237 aa)) constitute a Peptidase M12B domain. Intrachain disulfides connect Cys223–Cys314, Cys345–Cys452, Cys400–Cys436, Cys461–Cys496, Cys472–Cys485, Cys474–Cys480, Cys484–Cys516, Cys504–Cys512, Cys511–Cys537, Cys525–Cys544, Cys531–Cys563, Cys556–Cys568, Cys573–Cys599, Cys581–Cys608, Cys583–Cys598, Cys595–Cys640, and Cys633–Cys646. Residues Asn268 and Asn279 are each glycosylated (N-linked (GlcNAc...) asparagine). His384 is a Zn(2+) binding site. Glu385 is an active-site residue. Zn(2+) is bound by residues His388 and His394. Asn440 carries N-linked (GlcNAc...) asparagine glycosylation. The 95-residue stretch at 458–552 (QPICGNGMVE…LCPASDPKPN (95 aa)) folds into the Disintegrin domain. N-linked (GlcNAc...) asparagine glycosylation occurs at Asn552. Residues 674–694 (WIVAHWWAVLLMGIALIMLMA) form a helical membrane-spanning segment. Topologically, residues 695–749 (GFIKICSVHTPSSNPKLPPPKPLPGTLKRRRPPQPIQQPPRQRPRESYQMGHMRR) are cytoplasmic. The disordered stretch occupies residues 705 to 749 (PSSNPKLPPPKPLPGTLKRRRPPQPIQQPPRQRPRESYQMGHMRR). The short motif at 709–716 (PKLPPPKP) is the SH3-binding element. Thr720 bears the Phosphothreonine mark. Residues 723–729 (RRRPPQP) carry the SH3-binding motif. The interval 735-749 (RQRPRESYQMGHMRR) is interaction with AP2A1, AP2A2 and AP2M1.

In terms of assembly, forms a ternary EFNA5-EPHA3-ADAM10 complex mediating EFNA5 extracellular domain shedding by ADAM10 which regulates the EFNA5-EPHA3 complex internalization and function, the cleavage occurs in trans, with ADAM10 and its substrate being on the membranes of opposing cells. Interacts with the clathrin adapter AP2 complex subunits AP2A1, AP2A2, AP2B1, and AP2M1; this interaction facilitates ADAM10 endocytosis from the plasma membrane during long-term potentiation in hippocampal neurons. Forms a ternary complex composed of ADAM10, EPHA4 and CADH1; within the complex, ADAM10 cleaves CADH1 which disrupts adherens junctions. Interacts with EPHA2. Interacts with NGF in a divalent cation-dependent manner. Interacts with TSPAN14; the interaction promotes ADAM10 maturation and cell surface expression. Interacts with TSPAN5, TSPAN10, TSPAN14, TSPAN15, TSPAN17 and TSPAN33; these interactions regulate ADAM10 substrate specificity, endocytosis and turnover. Interacts (via extracellular domain) with TSPAN33 (via extracellular domain) and (via cytoplasmic domain) with AFDN; interaction with TSPAN33 allows the docking of ADAM10 to zonula adherens through a PDZ11-dependent interaction between TSPAN33 and PLEKHA7 while interaction with AFDN locks ADAM10 at zonula adherens. Interacts with DLG1; this interaction recruits ADAM10 to the cell membrane during long-term depression in hippocampal neurons. Interacts (via extracellular domain) with BACE1 (via extracellular domain). Interacts with FAM171A1. Zn(2+) serves as cofactor. In terms of processing, the precursor is cleaved by furin and PCSK7. As to expression, expressed in the brain, specifically in neurons and astrocytes (at protein level). Expressed in inner and outer pillar cells of the organ of Corti (at protein level). Expressed in kidney and lung.

The protein resides in the cell membrane. It is found in the golgi apparatus membrane. The protein localises to the cytoplasmic vesicle. It localises to the clathrin-coated vesicle. Its subcellular location is the cell projection. The protein resides in the axon. It is found in the dendrite. The protein localises to the cell junction. It localises to the adherens junction. Its subcellular location is the cytoplasm. It carries out the reaction Endopeptidase of broad specificity.. Its activity is regulated as follows. Catalytically inactive when the propeptide is intact and associated with the mature enzyme. The disintegrin and cysteine-rich regions modulate access of substrates to exerts an inhibitory effect on the cleavage of ADAM10 substrates. Functionally, transmembrane metalloprotease which mediates the ectodomain shedding of a myriad of transmembrane proteins, including adhesion proteins, growth factor precursors and cytokines being essential for development and tissue homeostasis. Associates with six members of the tetraspanin superfamily TspanC8 which regulate its exit from the endoplasmic reticulum and its substrate selectivity. Cleaves the membrane-bound precursor of TNF-alpha to its mature soluble form. Responsible for the proteolytical release of soluble JAM3 from endothelial cells surface. Responsible for the proteolytic release of several other cell-surface proteins, including heparin-binding epidermal growth-like factor, ephrin-A2, CD44, CDH2 and for constitutive and regulated alpha-secretase cleavage of amyloid precursor protein (APP) at '687-Lys-|-Leu-688'. Contributes to the normal cleavage of the cellular prion protein. Involved in the cleavage of the adhesion molecule L1 at the cell surface and in released membrane vesicles, suggesting a vesicle-based protease activity. Also controls the proteolytic processing of Notch and mediates lateral inhibition during neurogenesis. Required for the development of type 1 transitional B cells into marginal zone B cells, probably by cleaving Notch. Responsible for the FasL ectodomain shedding and for the generation of the remnant ADAM10-processed FasL (FasL APL) transmembrane form. Also cleaves the ectodomain of the integral membrane proteins CORIN and ITM2B. Mediates the proteolytic cleavage of LAG3, leading to release the secreted form of LAG3. Mediates the proteolytic cleavage of IL6R and IL11RA, leading to the release of secreted forms of IL6R and IL11RA. Enhances the cleavage of CHL1 by BACE1. Cleaves NRCAM. Cleaves TREM2, resulting in shedding of the TREM2 ectodomain. Involved in the development and maturation of glomerular and coronary vasculature. During development of the cochlear organ of Corti, promotes pillar cell separation by forming a ternary complex with CADH1 and EPHA4 and cleaving CADH1 at adherens junctions. May regulate the EFNA5-EPHA3 signaling. This chain is Disintegrin and metalloproteinase domain-containing protein 10 (Adam10), found in Mus musculus (Mouse).